The sequence spans 515 residues: Putative BTB/POZ domain-containing protein At3g49970 (515 aa).

Residues 1–63 form the BTB domain; sequence MLEKLSFLLH…CYDISFEINT (63 aa). In terms of domain architecture, NPH3 spans 149 to 409; it reads DWWADDLAVL…NSDSPAPATA (261 aa). At tyrosine 350 the chain carries Phosphotyrosine. The disordered stretch occupies residues 395-417; it reads QENLSNSDSPAPATAEKTLSPPE. Positions 418–452 form a coiled coil; sequence LSSYKNELSKLNRENQYLKLELLKVKMKFKELEKE. The segment at 494–515 is disordered; that stretch reads INPFGLKQGQTKQPKSRRHSIS.

Belongs to the NPH3 family.

Its pathway is protein modification; protein ubiquitination. May act as a substrate-specific adapter of an E3 ubiquitin-protein ligase complex (CUL3-RBX1-BTB) which mediates the ubiquitination and subsequent proteasomal degradation of target proteins. This Arabidopsis thaliana (Mouse-ear cress) protein is Putative BTB/POZ domain-containing protein At3g49970.